The primary structure comprises 639 residues: Coiled-coil domain-containing protein 93 homolog (639 aa).

The tract at residues 250-275 (KLESQLSGKDGSGKDTTEAEREEEEK) is disordered. The span at 260–275 (GSGKDTTEAEREEEEK) shows a compositional bias: basic and acidic residues. Positions 332–492 (AEKLHRQKIT…KNRDISLIQR (161 aa)) form a coiled coil.

It belongs to the CCDC93 family.

The polypeptide is Coiled-coil domain-containing protein 93 homolog (Dictyostelium discoideum (Social amoeba)).